The sequence spans 224 residues: Adenylate kinase (224 aa).

10–15 (GSGKGT) lines the ATP pocket. Positions 30–59 (ESGAIFRDNIKGGTDLGMKAKAYIDKGDLV) are NMP. AMP-binding positions include Ser31, Arg36, 57 to 59 (DLV), 85 to 88 (GFPR), and Gln92. The tract at residues 126–165 (GRRLCENDNNHPNNIFIDAIKPNGDKCRVCGGALSSRADD) is LID. Arg127 lines the ATP pocket. AMP is bound by residues Arg162 and Arg174. ATP is bound at residue Asn211.

Belongs to the adenylate kinase family. In terms of assembly, monomer.

The protein resides in the cytoplasm. It catalyses the reaction AMP + ATP = 2 ADP. Its pathway is purine metabolism; AMP biosynthesis via salvage pathway; AMP from ADP: step 1/1. Its function is as follows. Catalyzes the reversible transfer of the terminal phosphate group between ATP and AMP. Plays an important role in cellular energy homeostasis and in adenine nucleotide metabolism. The polypeptide is Adenylate kinase (Desulforapulum autotrophicum (strain ATCC 43914 / DSM 3382 / VKM B-1955 / HRM2) (Desulfobacterium autotrophicum)).